A 305-amino-acid polypeptide reads, in one-letter code: MPLLRIATRKSLLAMWQSEYVAARLRMLRPDLDVVLVPMSTRGDEILDRSLAAIGGKGLFLKELELAMLRGDADCAVHSLKDVPMDLEPPFMLAAVLSRDDPADALISNVYLSLESLPIGARVATSSLRRQAQLRFYRPDLRLFDLRGNVNTRLAKLDNGDYDAIVLACAGLRRLGLEQRMTARLAPPEWLPAPGQGAIAVESLTEDARIGTLLAGLDDLPTRQCVVAERTMNRALHGSCHVPVGAYASYEVGGMRLQGLVGCVADGRLVRAELCSAKDEGDMLGRAVAQCLLDAGAAELLAATA.

Residue C240 is modified to S-(dipyrrolylmethanemethyl)cysteine.

Belongs to the HMBS family. Monomer. Requires dipyrromethane as cofactor.

It catalyses the reaction 4 porphobilinogen + H2O = hydroxymethylbilane + 4 NH4(+). The protein operates within porphyrin-containing compound metabolism; protoporphyrin-IX biosynthesis; coproporphyrinogen-III from 5-aminolevulinate: step 2/4. Functionally, tetrapolymerization of the monopyrrole PBG into the hydroxymethylbilane pre-uroporphyrinogen in several discrete steps. The polypeptide is Porphobilinogen deaminase (hemC) (Xylella fastidiosa (strain 9a5c)).